A 212-amino-acid chain; its full sequence is Peroxisomal membrane protein 4 (212 aa).

N-linked (GlcNAc...) asparagine glycosylation occurs at asparagine 57. 2 helical membrane-spanning segments follow: residues 97–117 and 153–173; these read GKTYPAHAFLAAFLGGILVFG and WDPFPLLTAVVWGLVLWLFEY. The N-linked (GlcNAc...) asparagine glycan is linked to asparagine 206.

The protein belongs to the peroxisomal membrane protein PXMP2/4 family. In terms of assembly, interacts with PEX19. Expressed in normal prostate epithelial cells, and androgen-sensitive prostate adenocarcinoma cells. Not expressed in androgen-insensitive prostate adenocarcinoma cells.

It localises to the peroxisome membrane. The chain is Peroxisomal membrane protein 4 (PXMP4) from Homo sapiens (Human).